The sequence spans 420 residues: Tyrosine--tRNA ligase 2 (420 aa).

Y36 is an L-tyrosine binding site. Positions 41-50 (PTADSLHIGH) match the 'HIGH' region motif. Positions 171 and 175 each coordinate L-tyrosine. The 'KMSKS' region motif lies at 231-235 (KFGKT). Residue K234 coordinates ATP. The 67-residue stretch at 354 to 420 (LSLVDLLVTS…GKKKYFLLKY (67 aa)) folds into the S4 RNA-binding domain.

The protein belongs to the class-I aminoacyl-tRNA synthetase family. TyrS type 1 subfamily. In terms of assembly, homodimer.

The protein localises to the cytoplasm. It carries out the reaction tRNA(Tyr) + L-tyrosine + ATP = L-tyrosyl-tRNA(Tyr) + AMP + diphosphate + H(+). Its function is as follows. Catalyzes the attachment of tyrosine to tRNA(Tyr) in a two-step reaction: tyrosine is first activated by ATP to form Tyr-AMP and then transferred to the acceptor end of tRNA(Tyr). The polypeptide is Tyrosine--tRNA ligase 2 (Enterococcus faecalis (strain ATCC 700802 / V583)).